A 1877-amino-acid polypeptide reads, in one-letter code: Protein TIC 214 (1877 aa).

6 helical membrane-spanning segments follow: residues 18 to 38 (IINS…FSVG), 64 to 84 (FITG…HLAL), 87 to 107 (PHTI…WKNH), 124 to 144 (LSIQ…HFIL), 172 to 192 (VGWL…LFWI), and 221 to 241 (IFRI…PSPI). Disordered stretches follow at residues 246–313 (LKET…GKEK), 644–695 (DDFE…NSDR), and 774–795 (PEFK…QKKE). Composition is skewed to acidic residues over residues 251-268 (ETEE…EIET), 281-304 (GSTE…DETE), and 645-659 (DFEE…ESTE). Over residues 685–695 (TSTKDTTNSDR) the composition is skewed to basic and acidic residues.

This sequence belongs to the TIC214 family. Part of the Tic complex.

Its subcellular location is the plastid. The protein localises to the chloroplast inner membrane. Functionally, involved in protein precursor import into chloroplasts. May be part of an intermediate translocation complex acting as a protein-conducting channel at the inner envelope. This is Protein TIC 214 from Chloranthus spicatus (Chulantree).